Consider the following 276-residue polypeptide: Phosphate import ATP-binding protein PstB 2 (276 aa).

An ABC transporter domain is found at 22 to 262 (MAAVNLTLGF…PKHAETARYV (241 aa)). 54-61 (GPTGSGKT) is an ATP binding site.

Belongs to the ABC transporter superfamily. Phosphate importer (TC 3.A.1.7) family. In terms of assembly, the complex is composed of two ATP-binding proteins (PstB), two transmembrane proteins (PstC and PstA) and a solute-binding protein (PstS).

The protein localises to the cell membrane. It catalyses the reaction phosphate(out) + ATP + H2O = ADP + 2 phosphate(in) + H(+). Its function is as follows. Part of the ABC transporter complex PstSACB involved in phosphate import. Responsible for energy coupling to the transport system. In Mycobacterium bovis (strain ATCC BAA-935 / AF2122/97), this protein is Phosphate import ATP-binding protein PstB 2.